The sequence spans 427 residues: Gamma-glutamyl phosphate reductase (427 aa).

This sequence belongs to the gamma-glutamyl phosphate reductase family.

The protein localises to the cytoplasm. The catalysed reaction is L-glutamate 5-semialdehyde + phosphate + NADP(+) = L-glutamyl 5-phosphate + NADPH + H(+). The protein operates within amino-acid biosynthesis; L-proline biosynthesis; L-glutamate 5-semialdehyde from L-glutamate: step 2/2. In terms of biological role, catalyzes the NADPH-dependent reduction of L-glutamate 5-phosphate into L-glutamate 5-semialdehyde and phosphate. The product spontaneously undergoes cyclization to form 1-pyrroline-5-carboxylate. In Rhizobium etli (strain CIAT 652), this protein is Gamma-glutamyl phosphate reductase.